The sequence spans 384 residues: Putative 8-amino-7-oxononanoate synthase (384 aa).

Arg22 contacts substrate. Position 109–110 (109–110 (GY)) interacts with pyridoxal 5'-phosphate. His134 serves as a coordination point for substrate. Residues Ser182, 207–210 (DDAH), and 236–239 (TLSK) contribute to the pyridoxal 5'-phosphate site. Lys239 is modified (N6-(pyridoxal phosphate)lysine). Thr348 contacts substrate.

The protein belongs to the class-II pyridoxal-phosphate-dependent aminotransferase family. BioF subfamily. In terms of assembly, homodimer. It depends on pyridoxal 5'-phosphate as a cofactor.

The catalysed reaction is 6-carboxyhexanoyl-[ACP] + L-alanine + H(+) = (8S)-8-amino-7-oxononanoate + holo-[ACP] + CO2. Its pathway is cofactor biosynthesis; biotin biosynthesis. In terms of biological role, catalyzes the decarboxylative condensation of pimeloyl-[acyl-carrier protein] and L-alanine to produce 8-amino-7-oxononanoate (AON), [acyl-carrier protein], and carbon dioxide. The sequence is that of Putative 8-amino-7-oxononanoate synthase (bioF) from Caulobacter vibrioides (strain ATCC 19089 / CIP 103742 / CB 15) (Caulobacter crescentus).